We begin with the raw amino-acid sequence, 299 residues long: Quinolinate synthase (299 aa).

2 residues coordinate iminosuccinate: His21 and Ser38. Cys83 lines the [4Fe-4S] cluster pocket. Iminosuccinate-binding positions include 109–111 (YVN) and Ser126. Cys170 is a binding site for [4Fe-4S] cluster. Residues 196-198 (HPE) and Thr213 each bind iminosuccinate. Cys256 contacts [4Fe-4S] cluster.

This sequence belongs to the quinolinate synthase family. Type 2 subfamily. The cofactor is [4Fe-4S] cluster.

Its subcellular location is the cytoplasm. It carries out the reaction iminosuccinate + dihydroxyacetone phosphate = quinolinate + phosphate + 2 H2O + H(+). The protein operates within cofactor biosynthesis; NAD(+) biosynthesis; quinolinate from iminoaspartate: step 1/1. In terms of biological role, catalyzes the condensation of iminoaspartate with dihydroxyacetone phosphate to form quinolinate. The protein is Quinolinate synthase of Pyrococcus abyssi (strain GE5 / Orsay).